Reading from the N-terminus, the 123-residue chain is Holo-[acyl-carrier-protein] synthase (123 aa).

Positions 8 and 60 each coordinate Mg(2+).

The protein belongs to the P-Pant transferase superfamily. AcpS family. It depends on Mg(2+) as a cofactor.

Its subcellular location is the cytoplasm. It carries out the reaction apo-[ACP] + CoA = holo-[ACP] + adenosine 3',5'-bisphosphate + H(+). In terms of biological role, transfers the 4'-phosphopantetheine moiety from coenzyme A to a Ser of acyl-carrier-protein. This is Holo-[acyl-carrier-protein] synthase from Wolbachia pipientis wMel.